Reading from the N-terminus, the 499-residue chain is Uridine-cytidine kinase A (499 aa).

Residues 1 to 44 are disordered; it reads MSDNSTTKVTTNDSPSLTTTTSTTTAPTTTTTTTTTPTHNHDTT. Low complexity predominate over residues 10–38; sequence TTNDSPSLTTTTSTTTAPTTTTTTTTTPT. ATP is bound at residue 78-85; that stretch reads GGSASGKT.

Belongs to the uridine kinase family.

It carries out the reaction uridine + ATP = UMP + ADP + H(+). The catalysed reaction is cytidine + ATP = CMP + ADP + H(+). It participates in pyrimidine metabolism; CTP biosynthesis via salvage pathway; CTP from cytidine: step 1/3. The protein operates within pyrimidine metabolism; UMP biosynthesis via salvage pathway; UMP from uridine: step 1/1. Functionally, catalyzes the conversion of uridine into uridine monophosphate and cytidine into cytidine monophosphate in the pyrimidine salvage pathway. The chain is Uridine-cytidine kinase A (udkA) from Dictyostelium discoideum (Social amoeba).